Consider the following 387-residue polypeptide: Phosphoglycerate kinase (387 aa).

Substrate is bound by residues 21-23 (DLN), Arg36, 59-62 (HLGR), Arg113, and Arg146. Residues Lys197, Glu314, and 340–343 (GGDT) each bind ATP.

Belongs to the phosphoglycerate kinase family. In terms of assembly, monomer.

It localises to the cytoplasm. It catalyses the reaction (2R)-3-phosphoglycerate + ATP = (2R)-3-phospho-glyceroyl phosphate + ADP. The protein operates within carbohydrate degradation; glycolysis; pyruvate from D-glyceraldehyde 3-phosphate: step 2/5. The protein is Phosphoglycerate kinase of Yersinia pestis bv. Antiqua (strain Antiqua).